A 353-amino-acid chain; its full sequence is Photosystem II protein D1 (353 aa).

Residue Thr-2 is modified to N-acetylthreonine. The residue at position 2 (Thr-2) is a Phosphothreonine. 3 helical membrane passes run 29–46 (YIGW…TATS), 118–133 (HFLL…EWEL), and 142–156 (WIAV…AATA). Residue His-118 participates in chlorophyll a binding. Tyr-126 is a pheophytin a binding site. The [CaMn4O5] cluster site is built by Asp-170 and Glu-189. The chain crosses the membrane as a helical span at residues 197–218 (FHMLGVAGVFGGSLFSAMHGSL). A chlorophyll a-binding site is contributed by His-198. Residues His-215 and 264–265 (SF) contribute to the a quinone site. Fe cation is bound at residue His-215. His-272 lines the Fe cation pocket. Residues 274 to 288 (FLAAWPVIGIWFTAL) traverse the membrane as a helical segment. Positions 332, 333, 342, and 344 each coordinate [CaMn4O5] cluster. Residues 345-353 (AVEAPSTNG) constitute a propeptide that is removed on maturation.

Belongs to the reaction center PufL/M/PsbA/D family. In terms of assembly, PSII is composed of 1 copy each of membrane proteins PsbA, PsbB, PsbC, PsbD, PsbE, PsbF, PsbH, PsbI, PsbJ, PsbK, PsbL, PsbM, PsbT, PsbX, PsbY, PsbZ, Psb30/Ycf12, at least 3 peripheral proteins of the oxygen-evolving complex and a large number of cofactors. It forms dimeric complexes. It depends on The D1/D2 heterodimer binds P680, chlorophylls that are the primary electron donor of PSII, and subsequent electron acceptors. It shares a non-heme iron and each subunit binds pheophytin, quinone, additional chlorophylls, carotenoids and lipids. D1 provides most of the ligands for the Mn4-Ca-O5 cluster of the oxygen-evolving complex (OEC). There is also a Cl(-1) ion associated with D1 and D2, which is required for oxygen evolution. The PSII complex binds additional chlorophylls, carotenoids and specific lipids. as a cofactor. Post-translationally, tyr-161 forms a radical intermediate that is referred to as redox-active TyrZ, YZ or Y-Z. C-terminally processed by CTPA; processing is essential to allow assembly of the oxygen-evolving complex and thus photosynthetic growth.

It localises to the plastid. The protein localises to the chloroplast thylakoid membrane. The catalysed reaction is 2 a plastoquinone + 4 hnu + 2 H2O = 2 a plastoquinol + O2. Its function is as follows. Photosystem II (PSII) is a light-driven water:plastoquinone oxidoreductase that uses light energy to abstract electrons from H(2)O, generating O(2) and a proton gradient subsequently used for ATP formation. It consists of a core antenna complex that captures photons, and an electron transfer chain that converts photonic excitation into a charge separation. The D1/D2 (PsbA/PsbD) reaction center heterodimer binds P680, the primary electron donor of PSII as well as several subsequent electron acceptors. In Buxus microphylla (Littleleaf boxwood), this protein is Photosystem II protein D1.